Reading from the N-terminus, the 2406-residue chain is Highly reducing polyketide synthase dmxL2 (2406 aa).

One can recognise a Ketosynthase family 3 (KS3) domain in the interval 1-399 (MEAFWSASKK…GTNAHAVLDD (399 aa)). C130 is an active-site residue. The active-site For beta-ketoacyl synthase activity is C130. Residues 414–476 (GHASNGTNGT…GPTDGPTSRP (63 aa)) form a disordered region. Over residues 417–448 (SNGTNGTLTNGHILNGEHTSNGMNGTLTNGHA) the composition is skewed to polar residues. A malonyl-CoA:ACP transacylase (MAT) domain region spans residues 574 to 911 (FVFTGQGAQW…LAGSLFTQGY (338 aa)). Residue S665 is the For malonyltransferase activity of the active site. Positions 962–1096 (PSLLGSPSPS…GLLVIEYEAA (135 aa)) are N-terminal hotdog fold. A PKS/mFAS DH domain is found at 962–1278 (PSLLGSPSPS…CAEIAGASSN (317 aa)). A dehydratase (DH) domain region spans residues 964-1273 (LLGSPSPSLA…IEGFLCAEIA (310 aa)). H994 functions as the Proton acceptor; for dehydratase activity in the catalytic mechanism. A C-terminal hotdog fold region spans residues 1124 to 1278 (VHRLDPSGFY…CAEIAGASSN (155 aa)). D1189 acts as the Proton donor; for dehydratase activity in catalysis. The tract at residues 1694–2006 (GMLGSVCLEP…TGKHLGKIAL (313 aa)) is enoylreductase (ER) domain. The tract at residues 2032–2210 (GVYLLVGGLG…TTVDLGIMRD (179 aa)) is ketoreductase (KR) domain. Residues 2318-2395 (EASDSVLEAL…TFCNRIAAKS (78 aa)) enclose the Carrier domain. S2355 carries the post-translational modification O-(pantetheine 4'-phosphoryl)serine.

The protein operates within secondary metabolite biosynthesis. Functionally, highly reducing polyketide synthase; part of the gene cluster that mediates the biosynthesis of the dimeric xanthones cryptosporioptides. The pathway begins with the synthesis of atrochrysone thioester by the polyketide synthase dmx-nrPKS. The atrochrysone carboxyl ACP thioesterase dmxR1 then breaks the thioester bond and releases the atrochrysone carboxylic acid from dmx-nrPKS. Atrochrysone carboxylic acid is decarboxylated by the decarboxylase dmxR15, and oxidized by the anthrone oxygenase dmxR16 to yield emodin. Emodin is then reduced to emodin hydroquinone by the oxidoreductase dmxR7. A-ring reduction by the short chain dehydrogenase dmxR18, dehydration by the scytalone dehydratase-like protein dmxR17 and probable spontaneous re-oxidation, results in overall deoxygenation to chrysophanol. Baeyer-Villiger oxidation by the Baeyer-Villiger monooxygenase (BVMO) dmxR6 then yields monodictylactone in equilibrium with monodictyphenone. In the case of the cryptosporioptides biosynthesis, monodictylactone is reduced at C-12 to an alcohol (by the short chain dehydrogenases dmxR12 or dmxR8) and hydroxylated at C-5 by dmxR9, yielding the electron-rich aromatic which could eliminate H(2)O to form the ortho-quinonemethide, followed by tautomerisation to paraquinone and complete the formal reduction to produce the 10-methylgroup. Conjugate addition of C-4a-OH to the resulting paraquinone by the monooxygenase dmxR10 then gives cyclohexadienone, which is then reduced at C-5 by the short chain dehydrogenase dmxR3 to give the dihydroxanthone. The 6,7-epoxide in the cryptosporioptides could be introduced by the cytochrome P450 monooxygenase dmxL3. The highly reducing PKS dmxL2 manufactures butyrate, which is further carboxylated by dmxL1 to form ethylmalonate. It is not yet clear whether the carboxylation occurs while the butyrate is attached to the ACP of dmxL2, but this unusual fungal metabolite could then be esterified to O-5 by the O-acetyltransferase dmxR13. Finally, dimerization performed by dmxR5 gives the observed dimers cryptosporioptides A, B and C as the final products of the pathway. The chain is Highly reducing polyketide synthase dmxL2 from Cryptosporiopsis sp. (strain 8999).